Consider the following 147-residue polypeptide: uncharacterized protein (147 aa).

Residues 3 to 23 traverse the membrane as a helical segment; the sequence is APMVGMVVLVVTLGAAVLALS.

To M.tuberculosis Rv1312.

It is found in the membrane. This is an uncharacterized protein from Mycobacterium leprae (strain TN).